We begin with the raw amino-acid sequence, 327 residues long: D-alanine--D-alanine ligase (327 aa).

The ATP-grasp domain maps to 113–312; it reads KRLWMTHGLA…YEDFVMQVLA (200 aa). Position 139–194 (139–194) interacts with ATP; the sequence is VADLGLPLIVKPAREGSSIGLTKVIAADQMRAAFEKAAGLDADVIAETFIDGAELT. Aspartate 266, glutamate 279, and asparagine 281 together coordinate Mg(2+).

Belongs to the D-alanine--D-alanine ligase family. Mg(2+) is required as a cofactor. It depends on Mn(2+) as a cofactor.

It is found in the cytoplasm. It carries out the reaction 2 D-alanine + ATP = D-alanyl-D-alanine + ADP + phosphate + H(+). Its pathway is cell wall biogenesis; peptidoglycan biosynthesis. Functionally, cell wall formation. This is D-alanine--D-alanine ligase from Cupriavidus metallidurans (strain ATCC 43123 / DSM 2839 / NBRC 102507 / CH34) (Ralstonia metallidurans).